The sequence spans 944 residues: DNA ligase 4 (944 aa).

ATP-binding residues include glutamate 280, lysine 282, arginine 287, glutamate 340, phenylalanine 382, glutamate 442, lysine 447, lysine 464, and lysine 466. The N6-AMP-lysine intermediate role is filled by lysine 282. Glutamate 340 contacts Mg(2+). Glutamate 442 contacts Mg(2+). 2 consecutive BRCT domains span residues 681 to 780 (PISN…PNYC) and 836 to 941 (FPLF…DFPV).

This sequence belongs to the ATP-dependent DNA ligase family. As to quaternary structure, component of the DNA ligase IV complex, composed of DNL4, LIF1 and NEJ1. Interacts (via BRCT domain) with LIF1. Interacts with NEJ1. Interacts with POL4 in the DNL4-LIF1 complex. Mg(2+) is required as a cofactor.

It is found in the nucleus. It carries out the reaction ATP + (deoxyribonucleotide)n-3'-hydroxyl + 5'-phospho-(deoxyribonucleotide)m = (deoxyribonucleotide)n+m + AMP + diphosphate.. Its function is as follows. DNA ligase involved in DNA non-homologous end joining (NHEJ); required for double-strand break (DSB) repair. The sequence is that of DNA ligase 4 (DNL4) from Saccharomyces cerevisiae (strain ATCC 204508 / S288c) (Baker's yeast).